The primary structure comprises 360 residues: Glutamate 5-kinase (360 aa).

K7 serves as a coordination point for ATP. 3 residues coordinate substrate: S47, D134, and N146. Residues 166–167 and 208–214 each bind ATP; these read TD and TGGIKTK. In terms of domain architecture, PUA spans 273–344; sequence VGEIHLDDGA…IGINSRSETT (72 aa).

This sequence belongs to the glutamate 5-kinase family.

The protein localises to the cytoplasm. The enzyme catalyses L-glutamate + ATP = L-glutamyl 5-phosphate + ADP. Its pathway is amino-acid biosynthesis; L-proline biosynthesis; L-glutamate 5-semialdehyde from L-glutamate: step 1/2. Its function is as follows. Catalyzes the transfer of a phosphate group to glutamate to form L-glutamate 5-phosphate. The protein is Glutamate 5-kinase of Prochlorococcus marinus (strain NATL2A).